Here is a 92-residue protein sequence, read N- to C-terminus: Small ribosomal subunit protein uS19 (92 aa).

This sequence belongs to the universal ribosomal protein uS19 family.

Its function is as follows. Protein S19 forms a complex with S13 that binds strongly to the 16S ribosomal RNA. This Treponema denticola (strain ATCC 35405 / DSM 14222 / CIP 103919 / JCM 8153 / KCTC 15104) protein is Small ribosomal subunit protein uS19.